A 141-amino-acid polypeptide reads, in one-letter code: Arsenate reductase (141 aa).

The active-site Nucleophile; cysteine thioarsenate intermediate is cysteine 12. Residues 122 to 141 (GAFTKEDGEKITDESGKRLK) are disordered. The span at 125–141 (TKEDGEKITDESGKRLK) shows a compositional bias: basic and acidic residues.

It belongs to the ArsC family.

The catalysed reaction is [glutaredoxin]-dithiol + arsenate + glutathione + H(+) = glutathionyl-S-S-[glutaredoxin] + arsenite + H2O. In terms of biological role, involved in resistance to arsenate. Catalyzes the reduction of arsenate [As(V)] to arsenite [As(III)]. This Yersinia enterocolitica protein is Arsenate reductase (arsC).